A 303-amino-acid polypeptide reads, in one-letter code: tRNA dimethylallyltransferase (303 aa).

G16–S23 serves as a coordination point for ATP. A substrate-binding site is contributed by T18 to S23. The interaction with substrate tRNA stretch occupies residues D41–Q44. Residues A141–P161 form a disordered region. Residues Q165–R169 are interaction with substrate tRNA.

Belongs to the IPP transferase family. Monomer. Requires Mg(2+) as cofactor.

The enzyme catalyses adenosine(37) in tRNA + dimethylallyl diphosphate = N(6)-dimethylallyladenosine(37) in tRNA + diphosphate. Functionally, catalyzes the transfer of a dimethylallyl group onto the adenine at position 37 in tRNAs that read codons beginning with uridine, leading to the formation of N6-(dimethylallyl)adenosine (i(6)A). The chain is tRNA dimethylallyltransferase from Rhizobium meliloti (strain 1021) (Ensifer meliloti).